A 736-amino-acid polypeptide reads, in one-letter code: Gephyrin (736 aa).

The interval 14 to 166 is MPT Mo-transferase; that stretch reads QIRVGVLTVS…FILPALPHAI (153 aa). The interval 140 to 316 is interaction with GABARAP; the sequence is LIINLPGSKK…VDITKVARRH (177 aa). 2 disordered regions span residues 181-232 and 260-290; these read DELE…DSSS and TASL…PKVQ. A compositionally biased stretch (pro residues) spans 187–199; sequence PSPPPPLSPPPTT. 2 positions are modified to phosphoserine: S188 and S194. T198 is subject to Phosphothreonine. A Phosphoserine modification is found at S200. The S-palmitoyl cysteine moiety is linked to residue C212. Over residues 261–290 the composition is skewed to polar residues; that stretch reads ASLSTTPSESPRAQATSRLSTASCPTPKVQ. Phosphoserine is present on S262. Phosphothreonine occurs at positions 265 and 266. 2 positions are modified to phosphoserine: S268 and S270. C284 is lipidated: S-palmitoyl cysteine. Residue S305 is modified to Phosphoserine. Positions 326–736 are MPT adenylyltransferase; it reads MDKAFITVLE…VVDVMVIGRL (411 aa).

The protein in the N-terminal section; belongs to the MoaB/Mog family. This sequence in the C-terminal section; belongs to the MoeA family. In terms of assembly, homotrimer, homodimer and homooligomer. Interacts with GABARAP. Interacts with SRGAP2 (via SH3 domain). Interacts with GABRA3. Interacts with GLRB. GABRA3 and GLRB occupy overlapping binding sites. Interacts with ARHGAP32; IQSEC3, INSYN1 and INSYN2A. Mg(2+) is required as a cofactor. Palmitoylated. Palmitoylation is stimulated by GABA type A receptors activity. Palmitoylation by ZDHHC12 regulates clustering at synapses.

It localises to the postsynaptic cell membrane. The protein localises to the cell membrane. Its subcellular location is the cytoplasm. It is found in the cytosol. The protein resides in the cytoskeleton. It localises to the cell projection. The protein localises to the dendrite. Its subcellular location is the postsynaptic density. The catalysed reaction is molybdopterin + ATP + H(+) = adenylyl-molybdopterin + diphosphate. It catalyses the reaction adenylyl-molybdopterin + molybdate = Mo-molybdopterin + AMP + H(+). It participates in cofactor biosynthesis; molybdopterin biosynthesis. With respect to regulation, inhibited by copper and tungsten. In terms of biological role, microtubule-associated protein involved in membrane protein-cytoskeleton interactions. It is thought to anchor the inhibitory glycine receptor (GLYR) to subsynaptic microtubules. Acts as a major instructive molecule at inhibitory synapses, where it also clusters GABA type A receptors. Functionally, also has a catalytic activity and catalyzes two steps in the biosynthesis of the molybdenum cofactor. In the first step, molybdopterin is adenylated. Subsequently, molybdate is inserted into adenylated molybdopterin and AMP is released. This Homo sapiens (Human) protein is Gephyrin.